A 323-amino-acid polypeptide reads, in one-letter code: Glucokinase (323 aa).

8-13 (GDVGGT) lines the ATP pocket.

Belongs to the bacterial glucokinase family.

It localises to the cytoplasm. It catalyses the reaction D-glucose + ATP = D-glucose 6-phosphate + ADP + H(+). The polypeptide is Glucokinase (Yersinia pseudotuberculosis serotype I (strain IP32953)).